Consider the following 702-residue polypeptide: Ribosomal RNA large subunit methyltransferase K/L (702 aa).

A THUMP domain is found at 43 to 154 (LIYQSLMWSR…KETASIALDL (112 aa)).

The protein belongs to the methyltransferase superfamily. RlmKL family.

It localises to the cytoplasm. The catalysed reaction is guanosine(2445) in 23S rRNA + S-adenosyl-L-methionine = N(2)-methylguanosine(2445) in 23S rRNA + S-adenosyl-L-homocysteine + H(+). The enzyme catalyses guanosine(2069) in 23S rRNA + S-adenosyl-L-methionine = N(2)-methylguanosine(2069) in 23S rRNA + S-adenosyl-L-homocysteine + H(+). Functionally, specifically methylates the guanine in position 2445 (m2G2445) and the guanine in position 2069 (m7G2069) of 23S rRNA. The polypeptide is Ribosomal RNA large subunit methyltransferase K/L (Salmonella typhi).